Reading from the N-terminus, the 425-residue chain is Podosporapepsin (425 aa).

An N-terminal signal peptide occupies residues 1-28; sequence MVSLTDLFLASLLVPTSPWLCLPPRIDT. The propeptide at 29 to 91 is activation peptide; that stretch reads IDQRGGRVTL…QEEAFARIKR (63 aa). Residues 108–419 enclose the Peptidase A1 domain; sequence YVTPVTIGTP…GTNPPRIGFA (312 aa). The active site involves Asp-126. N-linked (GlcNAc...) asparagine glycans are attached at residues Asn-184 and Asn-273. Asp-310 is a catalytic residue. Cysteines 346 and 381 form a disulfide. An N-linked (GlcNAc...) asparagine glycan is attached at Asn-370.

It belongs to the peptidase A1 family.

The polypeptide is Podosporapepsin (PAPA) (Podospora anserina (Pleurage anserina)).